The sequence spans 239 residues: ATP-dependent dethiobiotin synthetase BioD (239 aa).

Residue 15–20 (EIGKTF) coordinates ATP. Threonine 19 is a binding site for Mg(2+). Lysine 40 is an active-site residue. Residues aspartate 57, 118-121 (EGVG), 178-179 (NH), and 211-213 (AHL) contribute to the ATP site. Residues aspartate 57 and glutamate 118 each contribute to the Mg(2+) site.

It belongs to the dethiobiotin synthetase family. As to quaternary structure, homodimer. Mg(2+) is required as a cofactor.

Its subcellular location is the cytoplasm. The enzyme catalyses (7R,8S)-7,8-diammoniononanoate + CO2 + ATP = (4R,5S)-dethiobiotin + ADP + phosphate + 3 H(+). The protein operates within cofactor biosynthesis; biotin biosynthesis; biotin from 7,8-diaminononanoate: step 1/2. Catalyzes a mechanistically unusual reaction, the ATP-dependent insertion of CO2 between the N7 and N8 nitrogen atoms of 7,8-diaminopelargonic acid (DAPA, also called 7,8-diammoniononanoate) to form a ureido ring. The chain is ATP-dependent dethiobiotin synthetase BioD from Burkholderia ambifaria (strain MC40-6).